A 430-amino-acid polypeptide reads, in one-letter code: Probable protein phosphatase 1N (430 aa).

Residues 16-65 (CKKKEREKEGREEEEEEEAGRRAPEGPRSLLTAPRRAQRPHGGAEASGGL) form a disordered region. The span at 17–26 (KKKEREKEGR) shows a compositional bias: basic and acidic residues. In terms of domain architecture, PPM-type phosphatase spans 66–326 (RFGASAAQGW…DNMTCILVCF (261 aa)). Mn(2+) contacts are provided by D103, G104, D274, and D317. The tract at residues 407-430 (GEKGQDGAGKSNPTHLGSALDMEA) is disordered.

It belongs to the PP2C family. Mg(2+) serves as cofactor. Mn(2+) is required as a cofactor.

It catalyses the reaction O-phospho-L-seryl-[protein] + H2O = L-seryl-[protein] + phosphate. The catalysed reaction is O-phospho-L-threonyl-[protein] + H2O = L-threonyl-[protein] + phosphate. The polypeptide is Probable protein phosphatase 1N (PPM1N) (Homo sapiens (Human)).